The following is a 347-amino-acid chain: GMP reductase (347 aa).

An NADP(+)-binding site is contributed by 108–131 (ADFEKTKQILDLNPALNFVCIDVA). 2 residues coordinate K(+): G181 and G183. Residue C186 is the Thioimidate intermediate of the active site. NADP(+) is bound at residue 216-239 (IVSDGGCTTPGDVAKAFGGGADFV).

The protein belongs to the IMPDH/GMPR family. GuaC type 1 subfamily. In terms of assembly, homotetramer.

The enzyme catalyses IMP + NH4(+) + NADP(+) = GMP + NADPH + 2 H(+). Catalyzes the irreversible NADPH-dependent deamination of GMP to IMP. It functions in the conversion of nucleobase, nucleoside and nucleotide derivatives of G to A nucleotides, and in maintaining the intracellular balance of A and G nucleotides. The polypeptide is GMP reductase (Shigella flexneri).